A 1229-amino-acid polypeptide reads, in one-letter code: Alpha,alpha-trehalose-phosphate synthase [UDP-forming] 2 (1229 aa).

The tract at residues 196–233 is disordered; the sequence is VSSDSEGEEAIHNVRSGTHTESESEEDPKAPRSGLATS. Over residues 213 to 225 the composition is skewed to basic and acidic residues; that stretch reads THTESESEEDPKA.

It in the N-terminal section; belongs to the glycosyltransferase 20 family. In the C-terminal section; belongs to the gob-1 trehalose phosphatase family.

The catalysed reaction is D-glucose 6-phosphate + UDP-alpha-D-glucose = alpha,alpha-trehalose 6-phosphate + UDP + H(+). In terms of biological role, catalyzes the production of trehalose from glucose-6-phosphate and UDP-alpha-D-glucose in a 2 step process. The sequence is that of Alpha,alpha-trehalose-phosphate synthase [UDP-forming] 2 (tps-2) from Caenorhabditis elegans.